A 167-amino-acid chain; its full sequence is UTP pyrophosphatase (167 aa).

The catalysed reaction is UTP + H2O = UMP + diphosphate + H(+). Specifically catalyzes the hydrolysis of UTP to UMP and diphosphate in vitro, albeit at apparently slow rate. Shows no activity towards ATP, GTP, CTP, dTTP and ITP as substrates. In Escherichia coli (strain K12), this protein is UTP pyrophosphatase.